Consider the following 420-residue polypeptide: Histidine--tRNA ligase (420 aa).

The protein belongs to the class-II aminoacyl-tRNA synthetase family. In terms of assembly, homodimer.

It localises to the cytoplasm. It carries out the reaction tRNA(His) + L-histidine + ATP = L-histidyl-tRNA(His) + AMP + diphosphate + H(+). This is Histidine--tRNA ligase from Saccharopolyspora erythraea (strain ATCC 11635 / DSM 40517 / JCM 4748 / NBRC 13426 / NCIMB 8594 / NRRL 2338).